Reading from the N-terminus, the 166-residue chain is Ureidoglycolate lyase (166 aa).

Belongs to the ureidoglycolate lyase family. Homodimer. Ni(2+) serves as cofactor.

It carries out the reaction (S)-ureidoglycolate = urea + glyoxylate. Its pathway is nitrogen metabolism; (S)-allantoin degradation. Catalyzes the catabolism of the allantoin degradation intermediate (S)-ureidoglycolate, generating urea and glyoxylate. Involved in the utilization of allantoin as nitrogen source. The chain is Ureidoglycolate lyase from Azotobacter vinelandii (strain DJ / ATCC BAA-1303).